The primary structure comprises 296 residues: Cytidine deaminase (296 aa).

2 CMP/dCMP-type deaminase domains span residues 47–167 and 186–296; these read DSHE…FGPA and ESDD…VDPV. 88-90 contacts substrate; it reads NLE. Histidine 101 lines the Zn(2+) pocket. Glutamate 103 (proton donor) is an active-site residue. 2 residues coordinate Zn(2+): cysteine 128 and cysteine 131.

Belongs to the cytidine and deoxycytidylate deaminase family. Homodimer. It depends on Zn(2+) as a cofactor.

The enzyme catalyses cytidine + H2O + H(+) = uridine + NH4(+). It carries out the reaction 2'-deoxycytidine + H2O + H(+) = 2'-deoxyuridine + NH4(+). Functionally, this enzyme scavenges exogenous and endogenous cytidine and 2'-deoxycytidine for UMP synthesis. This Shewanella amazonensis (strain ATCC BAA-1098 / SB2B) protein is Cytidine deaminase.